Consider the following 417-residue polypeptide: Serine hydroxymethyltransferase 3 (417 aa).

(6S)-5,6,7,8-tetrahydrofolate is bound by residues Leu-121 and 125-127 (GHL). Residue Lys-229 is modified to N6-(pyridoxal phosphate)lysine. A (6S)-5,6,7,8-tetrahydrofolate-binding site is contributed by 354–356 (SPF).

It belongs to the SHMT family. In terms of assembly, homodimer. Pyridoxal 5'-phosphate serves as cofactor.

The protein localises to the cytoplasm. It carries out the reaction (6R)-5,10-methylene-5,6,7,8-tetrahydrofolate + glycine + H2O = (6S)-5,6,7,8-tetrahydrofolate + L-serine. It participates in one-carbon metabolism; tetrahydrofolate interconversion. It functions in the pathway amino-acid biosynthesis; glycine biosynthesis; glycine from L-serine: step 1/1. Functionally, catalyzes the reversible interconversion of serine and glycine with tetrahydrofolate (THF) serving as the one-carbon carrier. This reaction serves as the major source of one-carbon groups required for the biosynthesis of purines, thymidylate, methionine, and other important biomolecules. Also exhibits THF-independent aldolase activity toward beta-hydroxyamino acids, producing glycine and aldehydes, via a retro-aldol mechanism. This chain is Serine hydroxymethyltransferase 3, found in Pseudomonas aeruginosa (strain ATCC 15692 / DSM 22644 / CIP 104116 / JCM 14847 / LMG 12228 / 1C / PRS 101 / PAO1).